The sequence spans 497 residues: MSDLNDRLASYIEKVRFLEAQNRKLAADLDLLRGRWGKDTLSVRAMYEGELQEARKLVNDTNRQREELEKEIRKLLDELSEYRRKYEDALRGHQIDRDRIDELLNQLSGLEAEINLLRRRIANIIEEIARIKKENLQFANELTKARSDLDQETLNRIDFQNQVQTLLEEIDFMRRVHDQEIAELQAMASRDTTPENREYFKNELASAIRDIRAEYDQICNVNRMDMESWYKLKVQEIQTQSTRQNLEQNYAKKRLRVQLTDLRGKLADLEGRNSLLKQTQELNYQLEDDQRSYEAALNDRDAQIRKMDEECQALMMLLDTKQTLDAEIAIYRKMLEGEENRAGLRQLVEQVVKTHGLTQVDETESLRVLKGETASRTSFQRSAKGNVSIQETAPDGRYVVLENTHRSKEEAIGEWKLKRKIDGKREIVYTLPRDFILRPGKSVKIWARGQGGIHSPPEQLVFDLEDTFGSGSNVQTILFNREGEERATHIQRSSHTI.

The tract at residues 1–32 (MSDLNDRLASYIEKVRFLEAQNRKLAADLDLL) is coil 1A. The 342-residue stretch at 1–342 (MSDLNDRLAS…KMLEGEENRA (342 aa)) folds into the IF rod domain. The tract at residues 33–46 (RGRWGKDTLSVRAM) is linker 1. The segment at 47–184 (YEGELQEARK…RVHDQEIAEL (138 aa)) is coil 1B. Positions 185–202 (QAMASRDTTPENREYFKN) are linker 12. Residues 203–342 (ELASAIRDIR…KMLEGEENRA (140 aa)) are coil 2. Positions 343-497 (GLRQLVEQVV…THIQRSSHTI (155 aa)) are tail. One can recognise an LTD domain in the interval 375–493 (SRTSFQRSAK…EERATHIQRS (119 aa)).

It belongs to the intermediate filament family. As to quaternary structure, a and B can form homopolymers. Giant body muscle cells.

It is found in the cytoplasm. The polypeptide is Intermediate filament protein A (Ascaris suum (Pig roundworm)).